The following is a 433-amino-acid chain: Ectonucleoside triphosphate diphosphohydrolase 5 (433 aa).

Positions 1-24 (MATTWGAAFFMLVASCVCSTVFHR) are cleaved as a signal peptide. Residue Glu172 is the Proton acceptor of the active site. Asn232 is a glycosylation site (N-linked (GlcNAc...) asparagine). Cystine bridges form between Cys272–Cys308 and Cys368–Cys382.

The protein belongs to the GDA1/CD39 NTPase family. As to quaternary structure, monomer; active form. Homodimer; disulfide-linked. Homodimers are enzymatically inactive. Requires Ca(2+) as cofactor. Mg(2+) serves as cofactor. In terms of processing, N-glycosylated; high-mannose type.

It localises to the endoplasmic reticulum. The protein resides in the secreted. The enzyme catalyses a ribonucleoside 5'-diphosphate + H2O = a ribonucleoside 5'-phosphate + phosphate + H(+). The catalysed reaction is GDP + H2O = GMP + phosphate + H(+). It catalyses the reaction UDP + H2O = UMP + phosphate + H(+). It carries out the reaction IDP + H2O = IMP + phosphate + H(+). The enzyme catalyses CDP + H2O = CMP + phosphate + H(+). The catalysed reaction is ADP + H2O = AMP + phosphate + H(+). Its pathway is protein modification; protein glycosylation. Hydrolyzes nucleoside diphosphates with a preference for GDP, IDP and UDP compared to ADP and CDP. In the lumen of the endoplasmic reticulum, hydrolyzes UDP that acts as an end-product feedback inhibitor of the UDP-Glc:glycoprotein glucosyltransferases. UMP can be transported back by an UDP-sugar antiporter to the cytosol where it is consumed to regenerate UDP-glucose. Therefore, it positively regulates protein reglucosylation by clearing UDP from the ER lumen and by promoting the regeneration of UDP-glucose. Protein reglucosylation is essential to proper glycoprotein folding and quality control in the ER. The protein is Ectonucleoside triphosphate diphosphohydrolase 5 (ENTPD5) of Ailuropoda melanoleuca (Giant panda).